The primary structure comprises 283 residues: Phospholipase C (283 aa).

Residues 1-24 (MKKKVLALGAAITLVAPLQSVAFA) form the signal peptide. A propeptide spanning residues 25–38 (HENDGGQRFGVIPR) is cleaved from the precursor. Zn(2+)-binding residues include Trp-39, His-52, Asp-93, His-107, His-156, Asp-160, His-166, His-180, and Glu-184. The Zn-dependent PLC domain maps to 39 to 283 (WSAEDKHKEG…QLWFDTYGNR (245 aa)).

Belongs to the bacterial zinc-metallophospholipase C family. As to quaternary structure, monomer. Requires Zn(2+) as cofactor.

The catalysed reaction is a 1,2-diacyl-sn-glycero-3-phosphocholine + H2O = phosphocholine + a 1,2-diacyl-sn-glycerol + H(+). In terms of biological role, required, with sphingomyelinase, to effect target cell lysis (hemolysis). In Bacillus cereus, this protein is Phospholipase C (cerA).